The sequence spans 259 residues: 3-oxo-5-alpha-steroid 4-dehydrogenase 1 (259 aa).

5 consecutive transmembrane segments (helical) span residues 10 to 30 (LCLL…SIVG), 86 to 106 (VLLA…PVLI), 111 to 131 (PTLL…GYVQ), 146 to 166 (VTHP…VINI), and 206 to 226 (WCGF…LFTL).

The protein belongs to the steroid 5-alpha reductase family. In terms of tissue distribution, liver and prostate (at a low level).

The protein resides in the microsome membrane. It is found in the endoplasmic reticulum membrane. The catalysed reaction is a 3-oxo-5alpha-steroid + NADP(+) = a 3-oxo-Delta(4)-steroid + NADPH + H(+). It carries out the reaction 5alpha-pregnane-3,20-dione + NADP(+) = progesterone + NADPH + H(+). It catalyses the reaction 17beta-hydroxy-5alpha-androstan-3-one + NADP(+) = testosterone + NADPH + H(+). The enzyme catalyses androst-4-ene-3,17-dione + NADPH + H(+) = 5alpha-androstan-3,17-dione + NADP(+). Converts testosterone into 5-alpha-dihydrotestosterone and progesterone or corticosterone into their corresponding 5-alpha-3-oxosteroids. It plays a central role in sexual differentiation and androgen physiology. The polypeptide is 3-oxo-5-alpha-steroid 4-dehydrogenase 1 (Rattus norvegicus (Rat)).